Here is a 111-residue protein sequence, read N- to C-terminus: Large ribosomal subunit protein uL24 (111 aa).

The protein belongs to the universal ribosomal protein uL24 family. Part of the 50S ribosomal subunit.

In terms of biological role, one of two assembly initiator proteins, it binds directly to the 5'-end of the 23S rRNA, where it nucleates assembly of the 50S subunit. Functionally, one of the proteins that surrounds the polypeptide exit tunnel on the outside of the subunit. This chain is Large ribosomal subunit protein uL24, found in Streptococcus pneumoniae (strain Hungary19A-6).